A 191-amino-acid chain; its full sequence is Protein YceI (191 aa).

The N-terminal stretch at 1–22 (MKKSLLGLTFASLMFSAGSAVA) is a signal peptide.

This sequence belongs to the UPF0312 family. Type 1 subfamily.

It localises to the periplasm. This chain is Protein YceI, found in Shigella flexneri.